Consider the following 188-residue polypeptide: MSMLHQQKRKNHFVFLPLVILLAVCALLFIGLQQDPQKIASALIGKPVPTFSQADLLRTERRVTQQDLPQQTFLLNVWGSWCAYCKKEHPFLMQLAKSMPIVGLNYRDNPQNALAMLNQLGNPFQLVINDSRGELALNLGVDGAPETYLIDQYGVIRYRYSGPLTPEVWQEMFIPEWQKLEAENAKVR.

Residues 1-11 (MSMLHQQKRKN) lie on the Cytoplasmic side of the membrane. A helical membrane pass occupies residues 12-32 (HFVFLPLVILLAVCALLFIGL). At 33 to 188 (QQDPQKIASA…KLEAENAKVR (156 aa)) the chain is on the periplasmic side. The Thioredoxin domain maps to 42–179 (ALIGKPVPTF…QEMFIPEWQK (138 aa)). A disulfide bridge links Cys-82 with Cys-85.

It belongs to the thioredoxin family. DsbE subfamily.

Its subcellular location is the cell inner membrane. In terms of biological role, could be involved in disulfide bond formation. Could catalyzes a late, reductive step in the assembly of periplasmic NrfA c-type cytochrome, probably the reduction of disulfide bonds of the apocytochrome c to allow covalent linkage with the heme. Possible subunit of a heme lyase. In Pasteurella multocida (strain Pm70), this protein is Probable thiol:disulfide interchange protein DsbE-2 (nrfX).